The following is a 784-amino-acid chain: Protein Skeletor, isoforms B/C (784 aa).

The signal sequence occupies residues 1–28 (MLAMKDKPWLLLFGLLAALSCLASFGDA). DM13 domains are found at residues 34 to 143 (GTKI…VSIP) and 151 to 258 (PQKI…VRLP). Residues 287–419 (LAFEVRWAVA…GAESVVWAIG (133 aa)) enclose the DOMON domain. The tract at residues 451-491 (PLPEGARGNSNSSEQEDSAPAAQSSTGGAGYPPAGRPNVEP) is disordered.

In terms of assembly, interacts with Chro and Mgtor as part of a macromolecular complex forming the spindle matrix. Chro colocalizes with Skeletor (Skel) on the chromosomes at interphase and on spindle during metaphase.

It is found in the cytoplasm. Its subcellular location is the cytoskeleton. The protein resides in the spindle. It localises to the nucleus. The protein localises to the nucleolus. It is found in the chromosome. Functionally, provides structural support to stabilize and organize the microtubule spindle during mitosis (within embryonic somatic cells) and meiosis (within spermatocytes). The role in mitosis regulation depends on the Ran pathway. This is Protein Skeletor, isoforms B/C from Drosophila melanogaster (Fruit fly).